A 117-amino-acid polypeptide reads, in one-letter code: Immunoglobulin heavy variable 1-2 (117 aa).

The first 19 residues, 1–19 (MDWTWRILFLVAAATGAHS), serve as a signal peptide directing secretion. The residue at position 20 (Q20) is a Pyrrolidone carboxylic acid. The framework-1 stretch occupies residues 20 to 44 (QVQLVQSGAEVKKPGASVKVSCKAS). Positions 20 to 117 (QVQLVQSGAE…DDTAVYYCAR (98 aa)) constitute an Ig-like domain. C41 and C115 are oxidised to a cystine. The complementarity-determining-1 stretch occupies residues 45–52 (GYTFTGYY). The interval 53–69 (MHWVRQAPGQGLEWMGW) is framework-2. Residues 70 to 77 (INPNSGGT) form a complementarity-determining-2 region. A framework-3 region spans residues 78–115 (NYAQKFQGWVTMTRDTSISTAYMELSRLRSDDTAVYYC). Positions 116-117 (AR) are complementarity-determining-3.

Immunoglobulins are composed of two identical heavy chains and two identical light chains; disulfide-linked.

The protein resides in the secreted. It is found in the cell membrane. In terms of biological role, v region of the variable domain of immunoglobulin heavy chains that participates in the antigen recognition. Immunoglobulins, also known as antibodies, are membrane-bound or secreted glycoproteins produced by B lymphocytes. In the recognition phase of humoral immunity, the membrane-bound immunoglobulins serve as receptors which, upon binding of a specific antigen, trigger the clonal expansion and differentiation of B lymphocytes into immunoglobulins-secreting plasma cells. Secreted immunoglobulins mediate the effector phase of humoral immunity, which results in the elimination of bound antigens. The antigen binding site is formed by the variable domain of one heavy chain, together with that of its associated light chain. Thus, each immunoglobulin has two antigen binding sites with remarkable affinity for a particular antigen. The variable domains are assembled by a process called V-(D)-J rearrangement and can then be subjected to somatic hypermutations which, after exposure to antigen and selection, allow affinity maturation for a particular antigen. This chain is Immunoglobulin heavy variable 1-2, found in Homo sapiens (Human).